The chain runs to 273 residues: MHWMELWKAIILGMVEGLTEFAPVSSTGHMIMVDDLWLKSTEFLGKYAANTFKVVIQLGSILAAVVVFKDRFLDLLGVRGRHPGGHPRLNLIHVIIGLLPAGVLGVLFEDYIDEHLFSTKTVLIGLVLGALLMIAADKFAKKAARTQTVDQITYKQAFFVGLMQCLSLWPGFSRSGSTISGGVLVGMSHRAAADFTFIMAVPIMAGASGLSLLKNWQYVTAADIPFFIAGFFSAFVFALLAIRFFLELINRIRLVPFAVYRIVLAVVIYFLYF.

A run of 8 helical transmembrane segments spans residues 4 to 24 (MELW…FAPV), 48 to 68 (AANT…VVVF), 89 to 109 (LNLI…VLFE), 116 to 136 (LFST…MIAA), 152 to 172 (ITYK…WPGF), 193 to 213 (ADFT…LSLL), 222 to 242 (ADIP…LLAI), and 252 to 272 (IRLV…YFLY).

This sequence belongs to the UppP family.

Its subcellular location is the cell membrane. It carries out the reaction di-trans,octa-cis-undecaprenyl diphosphate + H2O = di-trans,octa-cis-undecaprenyl phosphate + phosphate + H(+). In terms of biological role, catalyzes the dephosphorylation of undecaprenyl diphosphate (UPP). Confers resistance to bacitracin. This chain is Undecaprenyl-diphosphatase, found in Geobacillus kaustophilus (strain HTA426).